We begin with the raw amino-acid sequence, 484 residues long: MKFIVKLQAEITIKSRPVRKRFTKILESSVKNVLRRIDEQVTTRMNWDNIEVNTKDNSPENRERLVEALKCIPGIPMFLEVQQSEFVDVHDIYEKTLAVHAESIENKTFCVRAKRTGNHDFNSLKVEQYVGGGLNQQVESAKVKLKNPDVTIHLEIKNKDLFIVTQRHKGLGGFPIATQEDVLSLMSGGFDSGVSSYQMIKKGARTHYCFFNLGGSAHEVGVKQISYYLWNKFGASHKVKFFAVDFEPVVAEILENVENSQMGVVLKRMMIRAATKIAERGKIQALVTGESLGQVSSQTLTNLNVINRVTDTLILRPLAAYDKQDIIDIARKIGTEEFSKTIPEYCGVISKKPTVKAVLSKVEEEEGNFDFDVLDKVVSETRVYDIRDIGKEAEEEIHAVDLVENIPENAVVVDIRSPEEEEDKPLELGDVEVKHIPFYKLSTQFGDLDMTKEYLLYCDHGVMSKLQALYLLDNGFKNVKVYRP.

The region spanning E63–R167 is the THUMP domain. Residues L185–M186, K267, G289, and Q298 contribute to the ATP site. Cysteines 346 and 458 form a disulfide. A Rhodanese domain is found at I406–P484. Catalysis depends on C458, which acts as the Cysteine persulfide intermediate.

The protein belongs to the ThiI family.

It localises to the cytoplasm. It carries out the reaction [ThiI sulfur-carrier protein]-S-sulfanyl-L-cysteine + a uridine in tRNA + 2 reduced [2Fe-2S]-[ferredoxin] + ATP + H(+) = [ThiI sulfur-carrier protein]-L-cysteine + a 4-thiouridine in tRNA + 2 oxidized [2Fe-2S]-[ferredoxin] + AMP + diphosphate. The enzyme catalyses [ThiS sulfur-carrier protein]-C-terminal Gly-Gly-AMP + S-sulfanyl-L-cysteinyl-[cysteine desulfurase] + AH2 = [ThiS sulfur-carrier protein]-C-terminal-Gly-aminoethanethioate + L-cysteinyl-[cysteine desulfurase] + A + AMP + 2 H(+). The protein operates within cofactor biosynthesis; thiamine diphosphate biosynthesis. Its function is as follows. Catalyzes the ATP-dependent transfer of a sulfur to tRNA to produce 4-thiouridine in position 8 of tRNAs, which functions as a near-UV photosensor. Also catalyzes the transfer of sulfur to the sulfur carrier protein ThiS, forming ThiS-thiocarboxylate. This is a step in the synthesis of thiazole, in the thiamine biosynthesis pathway. The sulfur is donated as persulfide by IscS. The sequence is that of tRNA sulfurtransferase from Colwellia psychrerythraea (strain 34H / ATCC BAA-681) (Vibrio psychroerythus).